The sequence spans 107 residues: Nucleoid-associated protein YaaK (107 aa).

The tract at residues 1–24 (MRGGMGNMQKMMKQMQKMQKDMAK) is disordered. The span at 8–17 (MQKMMKQMQK) shows a compositional bias: low complexity.

Belongs to the YbaB/EbfC family. In terms of assembly, homodimer.

It localises to the cytoplasm. Its subcellular location is the nucleoid. In terms of biological role, binds to DNA and alters its conformation. May be involved in regulation of gene expression, nucleoid organization and DNA protection. The sequence is that of Nucleoid-associated protein YaaK (yaaK) from Bacillus subtilis (strain 168).